The following is a 513-amino-acid chain: Serine/threonine-protein kinase UL13 homolog (513 aa).

The tract at residues 1-27 (MDTESKNKKTTNGGENSNCSHSTRTPD) is disordered. Over residues 10–23 (TTNGGENSNCSHST) the composition is skewed to polar residues. The Protein kinase domain occupies 145–487 (KEMPIYAGSG…FDSLNIFPYL (343 aa)). Residues 151–159 (AGSGSYGVV) and lysine 170 contribute to the ATP site. Aspartate 268 serves as the catalytic Proton acceptor.

This sequence belongs to the protein kinase superfamily. Ser/Thr protein kinase family. In terms of processing, autophosphorylated.

The protein localises to the virion tegument. Its subcellular location is the host nucleus. It catalyses the reaction L-seryl-[protein] + ATP = O-phospho-L-seryl-[protein] + ADP + H(+). The enzyme catalyses L-threonyl-[protein] + ATP = O-phospho-L-threonyl-[protein] + ADP + H(+). Multifunctional serine/threonine kinase that plays a role in several processes including egress of virus particles from the nucleus, modulation of the actin cytoskeleton and regulation of viral and cellular gene expression. This is Serine/threonine-protein kinase UL13 homolog (MDV025) from Gallid herpesvirus 2 (strain Chicken/Md5/ATCC VR-987) (GaHV-2).